The sequence spans 201 residues: Imidazole glycerol phosphate synthase subunit HisH (201 aa).

The Glutamine amidotransferase type-1 domain occupies 2 to 201 (KVVILDTGCA…ARLLKNFLEM (200 aa)). C77 functions as the Nucleophile in the catalytic mechanism. Catalysis depends on residues H183 and E185.

As to quaternary structure, heterodimer of HisH and HisF.

It localises to the cytoplasm. The enzyme catalyses 5-[(5-phospho-1-deoxy-D-ribulos-1-ylimino)methylamino]-1-(5-phospho-beta-D-ribosyl)imidazole-4-carboxamide + L-glutamine = D-erythro-1-(imidazol-4-yl)glycerol 3-phosphate + 5-amino-1-(5-phospho-beta-D-ribosyl)imidazole-4-carboxamide + L-glutamate + H(+). It catalyses the reaction L-glutamine + H2O = L-glutamate + NH4(+). The protein operates within amino-acid biosynthesis; L-histidine biosynthesis; L-histidine from 5-phospho-alpha-D-ribose 1-diphosphate: step 5/9. IGPS catalyzes the conversion of PRFAR and glutamine to IGP, AICAR and glutamate. The HisH subunit catalyzes the hydrolysis of glutamine to glutamate and ammonia as part of the synthesis of IGP and AICAR. The resulting ammonia molecule is channeled to the active site of HisF. This is Imidazole glycerol phosphate synthase subunit HisH from Photorhabdus laumondii subsp. laumondii (strain DSM 15139 / CIP 105565 / TT01) (Photorhabdus luminescens subsp. laumondii).